The chain runs to 125 residues: uncharacterized protein (125 aa).

The HTH dtxR-type domain maps to 1–63; it reads MSQSIEDYLE…YEPYIGITLT (63 aa).

It belongs to the DtxR/MntR family.

This is an uncharacterized protein from Methanocaldococcus jannaschii (strain ATCC 43067 / DSM 2661 / JAL-1 / JCM 10045 / NBRC 100440) (Methanococcus jannaschii).